The following is a 643-amino-acid chain: Phosphomethylpyrimidine synthase (643 aa).

Residues asparagine 248, methionine 277, tyrosine 306, histidine 342, 362 to 364 (SRG), 403 to 406 (DGLR), and glutamate 442 each bind substrate. Residue histidine 446 coordinates Zn(2+). Tyrosine 469 is a binding site for substrate. Histidine 510 lines the Zn(2+) pocket. Residues cysteine 590, cysteine 593, and cysteine 598 each coordinate [4Fe-4S] cluster.

Belongs to the ThiC family. Homodimer. [4Fe-4S] cluster is required as a cofactor.

It carries out the reaction 5-amino-1-(5-phospho-beta-D-ribosyl)imidazole + S-adenosyl-L-methionine = 4-amino-2-methyl-5-(phosphooxymethyl)pyrimidine + CO + 5'-deoxyadenosine + formate + L-methionine + 3 H(+). Its pathway is cofactor biosynthesis; thiamine diphosphate biosynthesis. Catalyzes the synthesis of the hydroxymethylpyrimidine phosphate (HMP-P) moiety of thiamine from aminoimidazole ribotide (AIR) in a radical S-adenosyl-L-methionine (SAM)-dependent reaction. This chain is Phosphomethylpyrimidine synthase, found in Burkholderia ambifaria (strain ATCC BAA-244 / DSM 16087 / CCUG 44356 / LMG 19182 / AMMD) (Burkholderia cepacia (strain AMMD)).